A 96-amino-acid chain; its full sequence is Putative septation protein SpoVG (96 aa).

It belongs to the SpoVG family.

In terms of biological role, could be involved in septation. This chain is Putative septation protein SpoVG, found in Geobacillus sp. (strain WCH70).